The sequence spans 71 residues: Ubiquinol-cytochrome c reductase complex assembly factor 6 (71 aa).

Topologically, residues 1–8 are mitochondrial matrix; that stretch reads MPAGVPMS. A helical; Signal-anchor for type II membrane protein membrane pass occupies residues 9–25; it reads TYLKMLAASLLAMCAGA. Topologically, residues 26–71 are mitochondrial intermembrane; it reads EVVHRYYRPDLTIPEIPPKRGELKTELLGLKERKHKPQISQQEELK. The disordered stretch occupies residues 52-71; sequence LLGLKERKHKPQISQQEELK.

It belongs to the UQCC6 family. In terms of assembly, interacts with UQCRC1. Interacts with UQCRQ. Interacts with UQCC5. Forms a complex, named COMB/coordinator of mitochondrial CYTB biogenesis, composed of UQCC1, UQCC2, UQCC4, UQCC5 and UQCC6; stabilizes nascent cytochrome b/MT-CYB and promotes its membrane insertion. Forms a complex, named COMA, composed of UQCC1, UQCC2 and UQCC4; activates MT-CYB translation. Forms a complex, named COMC, composed of UQCC1, UQCC2; UQCC3 and UQCC4; mediates MT-CYB hemylation and association with the first nuclear-encoded complex III subunit UQCRQ. Interacts with MT-CYB.

It localises to the mitochondrion inner membrane. In terms of biological role, required for the assembly and stability of the mitochondrial ubiquinol-cytochrome c reductase complex (complex III (CIII) or cytochrome b-c1 complex), a multisubunit transmembrane complex that is part of the mitochondrial electron transport chain (ETC) which drives oxidative phosphorylation. Mediates early complex III biogenesis. Participates in regulating the levels of electron transport chain proteins, and therefore energy supply, in response to changes in energy demand. Also required for cytochrome c oxidase complex (complex IV) assembly. The sequence is that of Ubiquinol-cytochrome c reductase complex assembly factor 6 from Pongo abelii (Sumatran orangutan).